Reading from the N-terminus, the 185-residue chain is Segregation and condensation protein B (185 aa).

Belongs to the ScpB family. Homodimer. Homodimerization may be required to stabilize the binding of ScpA to the Smc head domains. Component of a cohesin-like complex composed of ScpA, ScpB and the Smc homodimer, in which ScpA and ScpB bind to the head domain of Smc. The presence of the three proteins is required for the association of the complex with DNA.

It is found in the cytoplasm. Functionally, participates in chromosomal partition during cell division. May act via the formation of a condensin-like complex containing Smc and ScpA that pull DNA away from mid-cell into both cell halves. In Alkaliphilus oremlandii (strain OhILAs) (Clostridium oremlandii (strain OhILAs)), this protein is Segregation and condensation protein B.